Here is a 306-residue protein sequence, read N- to C-terminus: Putative S-adenosyl-L-methionine-dependent methyltransferase MAV_4442 (306 aa).

Residues aspartate 129 and 158–159 (DL) each bind S-adenosyl-L-methionine.

The protein belongs to the UPF0677 family.

In terms of biological role, exhibits S-adenosyl-L-methionine-dependent methyltransferase activity. The protein is Putative S-adenosyl-L-methionine-dependent methyltransferase MAV_4442 of Mycobacterium avium (strain 104).